Consider the following 292-residue polypeptide: MSISADKIKELRSRTQAGFMDCKKALEESDNDIEKAIAWLREKGISKAAKKASAIAAEGQTTVVEKGDNCVVLEVNSQTDFVSKNADFVKFVKDVAEVILKNKSADNVDSLVLPNKKTVADTAIDLTATIGEKISVRRAQLLTKKKGQSFGVYQHFNGRISAAVLIDGEVSSEVGKDVAMQVASMNPKFVNSSQVDKKWKDEEEKLLIQKTIEEGKPKEFAEKIVAGRMVKMLAEVCLEEQPFIKDNGITIIKYLKQNKANKVLEMVRFEVGEGIEKQEANFADEVKAQMKK.

Positions 79 to 82 (TDFV) are involved in Mg(2+) ion dislocation from EF-Tu.

It belongs to the EF-Ts family.

It is found in the cytoplasm. Functionally, associates with the EF-Tu.GDP complex and induces the exchange of GDP to GTP. It remains bound to the aminoacyl-tRNA.EF-Tu.GTP complex up to the GTP hydrolysis stage on the ribosome. This is Elongation factor Ts from Malacoplasma penetrans (strain HF-2) (Mycoplasma penetrans).